Here is a 397-residue protein sequence, read N- to C-terminus: Elongation factor Tu (397 aa).

The tr-type G domain maps to 10–207 (KPHVNIGTIG…ACDSYIPEPE (198 aa)). The G1 stretch occupies residues 19-26 (GHIDHGKT). 19–26 (GHIDHGKT) serves as a coordination point for GTP. Threonine 26 is a binding site for Mg(2+). A G2 region spans residues 60-64 (GITIA). The tract at residues 81–84 (DCPG) is G3. GTP contacts are provided by residues 81-85 (DCPGH) and 136-139 (NKCD). The segment at 136 to 139 (NKCD) is G4. A G5 region spans residues 174–176 (SAL).

The protein belongs to the TRAFAC class translation factor GTPase superfamily. Classic translation factor GTPase family. EF-Tu/EF-1A subfamily. As to quaternary structure, monomer.

The protein localises to the cytoplasm. It catalyses the reaction GTP + H2O = GDP + phosphate + H(+). GTP hydrolase that promotes the GTP-dependent binding of aminoacyl-tRNA to the A-site of ribosomes during protein biosynthesis. The protein is Elongation factor Tu of Oleidesulfovibrio alaskensis (strain ATCC BAA-1058 / DSM 17464 / G20) (Desulfovibrio alaskensis).